A 172-amino-acid polypeptide reads, in one-letter code: Translationally-controlled tumor protein homolog (172 aa).

Positions 1-172 (MIIYRDCISQ…FKDGLEIEKC (172 aa)) constitute a TCTP domain. Ser-46 carries the phosphoserine; by PLK1 modification.

This sequence belongs to the TCTP family.

It is found in the cytoplasm. Involved in calcium binding and microtubule stabilization. This Gallus gallus (Chicken) protein is Translationally-controlled tumor protein homolog (TPT1).